Here is a 330-residue protein sequence, read N- to C-terminus: Aspartate--ammonia ligase (330 aa).

This sequence belongs to the class-II aminoacyl-tRNA synthetase family. AsnA subfamily.

Its subcellular location is the cytoplasm. It catalyses the reaction L-aspartate + NH4(+) + ATP = L-asparagine + AMP + diphosphate + H(+). It functions in the pathway amino-acid biosynthesis; L-asparagine biosynthesis; L-asparagine from L-aspartate (ammonia route): step 1/1. The chain is Aspartate--ammonia ligase from Salmonella paratyphi A (strain ATCC 9150 / SARB42).